The chain runs to 171 residues: uncharacterized protein (171 aa).

The protein belongs to the transferase hexapeptide repeat family.

This is an uncharacterized protein from Bacillus subtilis (strain 168).